Here is a 271-residue protein sequence, read N- to C-terminus: Formamidopyrimidine-DNA glycosylase (271 aa).

The Schiff-base intermediate with DNA role is filled by Pro-2. Glu-3 acts as the Proton donor in catalysis. Catalysis depends on Lys-56, which acts as the Proton donor; for beta-elimination activity. Residues His-89, Arg-107, and Lys-151 each coordinate DNA. The segment at 236–270 (NVYGRAGLQCRQCGTPVRLSRQGQRSTYFCPHCQR) adopts an FPG-type zinc-finger fold. Arg-260 (proton donor; for delta-elimination activity) is an active-site residue.

It belongs to the FPG family. In terms of assembly, monomer. Zn(2+) is required as a cofactor.

The enzyme catalyses Hydrolysis of DNA containing ring-opened 7-methylguanine residues, releasing 2,6-diamino-4-hydroxy-5-(N-methyl)formamidopyrimidine.. The catalysed reaction is 2'-deoxyribonucleotide-(2'-deoxyribose 5'-phosphate)-2'-deoxyribonucleotide-DNA = a 3'-end 2'-deoxyribonucleotide-(2,3-dehydro-2,3-deoxyribose 5'-phosphate)-DNA + a 5'-end 5'-phospho-2'-deoxyribonucleoside-DNA + H(+). Functionally, involved in base excision repair of DNA damaged by oxidation or by mutagenic agents. Acts as a DNA glycosylase that recognizes and removes damaged bases. Has a preference for oxidized purines, such as 7,8-dihydro-8-oxoguanine (8-oxoG). Has AP (apurinic/apyrimidinic) lyase activity and introduces nicks in the DNA strand. Cleaves the DNA backbone by beta-delta elimination to generate a single-strand break at the site of the removed base with both 3'- and 5'-phosphates. The chain is Formamidopyrimidine-DNA glycosylase from Acidovorax ebreus (strain TPSY) (Diaphorobacter sp. (strain TPSY)).